Consider the following 110-residue polypeptide: Large ribosomal subunit protein uL22 (110 aa).

This sequence belongs to the universal ribosomal protein uL22 family. Part of the 50S ribosomal subunit.

Functionally, this protein binds specifically to 23S rRNA; its binding is stimulated by other ribosomal proteins, e.g. L4, L17, and L20. It is important during the early stages of 50S assembly. It makes multiple contacts with different domains of the 23S rRNA in the assembled 50S subunit and ribosome. Its function is as follows. The globular domain of the protein is located near the polypeptide exit tunnel on the outside of the subunit, while an extended beta-hairpin is found that lines the wall of the exit tunnel in the center of the 70S ribosome. In Maridesulfovibrio salexigens (strain ATCC 14822 / DSM 2638 / NCIMB 8403 / VKM B-1763) (Desulfovibrio salexigens), this protein is Large ribosomal subunit protein uL22.